The following is a 155-amino-acid chain: uncharacterized protein (155 aa).

The region spanning 6 to 155 is the N-acetyltransferase domain; sequence TCVRNARLAD…CDEIAMVKTL (150 aa).

It belongs to the acetyltransferase family.

This is an uncharacterized protein from Chlorobaculum tepidum (strain ATCC 49652 / DSM 12025 / NBRC 103806 / TLS) (Chlorobium tepidum).